We begin with the raw amino-acid sequence, 228 residues long: Response regulator SaeR (228 aa).

One can recognise a Response regulatory domain in the interval 3 to 116; that stretch reads HLLIVDDEQD…ELVLRINNLL (114 aa). Asp-51 is modified (4-aspartylphosphate). The segment at residues 127–226 is a DNA-binding region (ompR/PhoB-type); sequence VEQLSFDELT…VWGLGYKFER (100 aa).

In terms of processing, phosphorylated by SaeS.

It localises to the cytoplasm. Member of the two-component regulatory system SaeR/SaeS involved in the regulation of staphylococcal virulence factors in a strain-dependent fashion. Probably functions as a transcriptional regulator via a specific DNA-binding domain, recognizing motifs near the promoter sequences of target genes. The polypeptide is Response regulator SaeR (saeR) (Staphylococcus aureus (strain USA300)).